A 330-amino-acid polypeptide reads, in one-letter code: Aspartate--ammonia ligase (330 aa).

It belongs to the class-II aminoacyl-tRNA synthetase family. AsnA subfamily.

Its subcellular location is the cytoplasm. It carries out the reaction L-aspartate + NH4(+) + ATP = L-asparagine + AMP + diphosphate + H(+). Its pathway is amino-acid biosynthesis; L-asparagine biosynthesis; L-asparagine from L-aspartate (ammonia route): step 1/1. In Streptococcus pyogenes serotype M3 (strain ATCC BAA-595 / MGAS315), this protein is Aspartate--ammonia ligase.